We begin with the raw amino-acid sequence, 342 residues long: Ketol-acid reductoisomerase (NADP(+)) (342 aa).

One can recognise a KARI N-terminal Rossmann domain in the interval 2-181; it reads VKVYYNGDIK…GGARAGVLET (180 aa). NADP(+)-binding positions include 25–28, Arg48, Ser52, and 82–85; these read YGSQ and DEQQ. The active site involves His107. Gly133 lines the NADP(+) pocket. Positions 182 to 327 constitute a KARI C-terminal knotted domain; that stretch reads TFKEETETDL…RQLREMMPFV (146 aa). Mg(2+) contacts are provided by Asp190, Glu194, Glu226, and Glu230. Ser251 contributes to the substrate binding site.

It belongs to the ketol-acid reductoisomerase family. It depends on Mg(2+) as a cofactor.

It catalyses the reaction (2R)-2,3-dihydroxy-3-methylbutanoate + NADP(+) = (2S)-2-acetolactate + NADPH + H(+). The enzyme catalyses (2R,3R)-2,3-dihydroxy-3-methylpentanoate + NADP(+) = (S)-2-ethyl-2-hydroxy-3-oxobutanoate + NADPH + H(+). The protein operates within amino-acid biosynthesis; L-isoleucine biosynthesis; L-isoleucine from 2-oxobutanoate: step 2/4. Its pathway is amino-acid biosynthesis; L-valine biosynthesis; L-valine from pyruvate: step 2/4. Its function is as follows. Involved in the biosynthesis of branched-chain amino acids (BCAA). Catalyzes an alkyl-migration followed by a ketol-acid reduction of (S)-2-acetolactate (S2AL) to yield (R)-2,3-dihydroxy-isovalerate. In the isomerase reaction, S2AL is rearranged via a Mg-dependent methyl migration to produce 3-hydroxy-3-methyl-2-ketobutyrate (HMKB). In the reductase reaction, this 2-ketoacid undergoes a metal-dependent reduction by NADPH to yield (R)-2,3-dihydroxy-isovalerate. The polypeptide is Ketol-acid reductoisomerase (NADP(+)) (Bacillus velezensis (strain DSM 23117 / BGSC 10A6 / LMG 26770 / FZB42) (Bacillus amyloliquefaciens subsp. plantarum)).